The sequence spans 208 residues: Large ribosomal subunit protein uL4 (208 aa).

Residues 44–79 (QRQGTHKSKERSEISGSTRKIGRQKGGGGARRGDMN) form a disordered region.

The protein belongs to the universal ribosomal protein uL4 family. Part of the 50S ribosomal subunit.

Functionally, one of the primary rRNA binding proteins, this protein initially binds near the 5'-end of the 23S rRNA. It is important during the early stages of 50S assembly. It makes multiple contacts with different domains of the 23S rRNA in the assembled 50S subunit and ribosome. Its function is as follows. Forms part of the polypeptide exit tunnel. The polypeptide is Large ribosomal subunit protein uL4 (Bacteroides fragilis (strain YCH46)).